Consider the following 44-residue polypeptide: uncharacterized protein (44 aa).

The N-terminal stretch at 1–16 is a signal peptide; the sequence is MRISLLAVILALLFVA.

This is an uncharacterized protein from Helicobacter pylori (strain ATCC 700392 / 26695) (Campylobacter pylori).